The primary structure comprises 265 residues: Hydroxyethylthiazole kinase 2 (265 aa).

Met-39 is a substrate binding site. The ATP site is built by Lys-115 and Thr-168. Gly-195 lines the substrate pocket.

The protein belongs to the Thz kinase family. Mg(2+) is required as a cofactor.

The enzyme catalyses 5-(2-hydroxyethyl)-4-methylthiazole + ATP = 4-methyl-5-(2-phosphooxyethyl)-thiazole + ADP + H(+). It participates in cofactor biosynthesis; thiamine diphosphate biosynthesis; 4-methyl-5-(2-phosphoethyl)-thiazole from 5-(2-hydroxyethyl)-4-methylthiazole: step 1/1. Functionally, catalyzes the phosphorylation of the hydroxyl group of 4-methyl-5-beta-hydroxyethylthiazole (THZ). The polypeptide is Hydroxyethylthiazole kinase 2 (Clostridium botulinum (strain ATCC 19397 / Type A)).